We begin with the raw amino-acid sequence, 329 residues long: Glycerol-3-phosphate dehydrogenase [NAD(P)+] (329 aa).

NADPH contacts are provided by Ser13, Trp14, His34, and Lys105. Residues Lys105, Gly134, and Ser136 each contribute to the sn-glycerol 3-phosphate site. Residue Ala138 coordinates NADPH. Residues Lys189, Asp242, Ser252, Arg253, and Asn254 each coordinate sn-glycerol 3-phosphate. The active-site Proton acceptor is the Lys189. Arg253 is a binding site for NADPH. The NADPH site is built by Val277 and Glu279.

This sequence belongs to the NAD-dependent glycerol-3-phosphate dehydrogenase family.

The protein resides in the cytoplasm. It carries out the reaction sn-glycerol 3-phosphate + NAD(+) = dihydroxyacetone phosphate + NADH + H(+). The catalysed reaction is sn-glycerol 3-phosphate + NADP(+) = dihydroxyacetone phosphate + NADPH + H(+). It functions in the pathway membrane lipid metabolism; glycerophospholipid metabolism. Its function is as follows. Catalyzes the reduction of the glycolytic intermediate dihydroxyacetone phosphate (DHAP) to sn-glycerol 3-phosphate (G3P), the key precursor for phospholipid synthesis. This chain is Glycerol-3-phosphate dehydrogenase [NAD(P)+], found in Legionella pneumophila (strain Paris).